A 362-amino-acid polypeptide reads, in one-letter code: Histidinol-phosphate aminotransferase (362 aa).

Position 219 is an N6-(pyridoxal phosphate)lysine (lysine 219).

It belongs to the class-II pyridoxal-phosphate-dependent aminotransferase family. Histidinol-phosphate aminotransferase subfamily. As to quaternary structure, homodimer. The cofactor is pyridoxal 5'-phosphate.

It catalyses the reaction L-histidinol phosphate + 2-oxoglutarate = 3-(imidazol-4-yl)-2-oxopropyl phosphate + L-glutamate. The protein operates within amino-acid biosynthesis; L-histidine biosynthesis; L-histidine from 5-phospho-alpha-D-ribose 1-diphosphate: step 7/9. The chain is Histidinol-phosphate aminotransferase from Maricaulis maris (strain MCS10) (Caulobacter maris).